The following is a 163-amino-acid chain: Choriogonadotropin subunit beta variant 2 (163 aa).

A signal peptide spans 1–18; sequence MSKGLLLLLLLSMGGTWA. Intrachain disulfides connect Cys-27/Cys-75, Cys-41/Cys-90, Cys-44/Cys-128, Cys-52/Cys-106, Cys-56/Cys-108, and Cys-111/Cys-118. Residues Asn-31 and Asn-48 are each glycosylated (N-linked (GlcNAc...) asparagine). The interval 129-163 is disordered; the sequence is DDPRFQASSSSKAPPPSLPSPSRLPGPSDTPILPQ. Positions 141–152 are enriched in pro residues; sequence APPPSLPSPSRL.

It belongs to the glycoprotein hormones subunit beta family. Expressed in placenta, testis and pituitary.

It localises to the secreted. The chain is Choriogonadotropin subunit beta variant 2 (CGB2) from Homo sapiens (Human).